Here is a 188-residue protein sequence, read N- to C-terminus: Peptide deformylase (188 aa).

Fe cation-binding residues include Cys-109 and His-152. Residue Glu-153 is part of the active site. Residue His-156 participates in Fe cation binding.

Belongs to the polypeptide deformylase family. Fe(2+) serves as cofactor.

The enzyme catalyses N-terminal N-formyl-L-methionyl-[peptide] + H2O = N-terminal L-methionyl-[peptide] + formate. Functionally, removes the formyl group from the N-terminal Met of newly synthesized proteins. Requires at least a dipeptide for an efficient rate of reaction. N-terminal L-methionine is a prerequisite for activity but the enzyme has broad specificity at other positions. This Chloroflexus aggregans (strain MD-66 / DSM 9485) protein is Peptide deformylase.